An 86-amino-acid chain; its full sequence is Electron transfer flavoprotein regulatory factor 1 (86 aa).

The protein belongs to the complex I LYR family.

The protein resides in the mitochondrion. In terms of biological role, acts as a regulator of the electron transfer flavoprotein by promoting the removal of flavin from the ETF holoenzyme (composed of ETFA and ETFB). This chain is Electron transfer flavoprotein regulatory factor 1, found in Taeniopygia guttata (Zebra finch).